Reading from the N-terminus, the 102-residue chain is Co-chaperonin GroES (102 aa).

It belongs to the GroES chaperonin family. As to quaternary structure, heptamer of 7 subunits arranged in a ring. Interacts with the chaperonin GroEL.

Its subcellular location is the cytoplasm. Functionally, together with the chaperonin GroEL, plays an essential role in assisting protein folding. The GroEL-GroES system forms a nano-cage that allows encapsulation of the non-native substrate proteins and provides a physical environment optimized to promote and accelerate protein folding. GroES binds to the apical surface of the GroEL ring, thereby capping the opening of the GroEL channel. The sequence is that of Co-chaperonin GroES from Chlamydia caviae (strain ATCC VR-813 / DSM 19441 / 03DC25 / GPIC) (Chlamydophila caviae).